Reading from the N-terminus, the 104-residue chain is MAKTRRVIYLFLTIVLLFCELIDEAQGSRFRCHHSEDYSCKKRSSHHHHHHHHHQQQQHHHKDTPPEELQGSIKTRRSKDIYGLNAFRSTEPGHSPGVGHLIKT.

Residues 1-27 (MAKTRRVIYLFLTIVLLFCELIDEAQG) form the signal peptide. Residues 28–85 (SRFRCHHSEDYSCKKRSSHHHHHHHHHQQQQHHHKDTPPEELQGSIKTRRSKDIYGLN) constitute a propeptide that is removed on maturation. Residues 37-104 (DYSCKKRSSH…SPGVGHLIKT (68 aa)) are disordered. Residues 41 to 62 (KKRSSHHHHHHHHHQQQQHHHK) are compositionally biased toward basic residues. Pro-92 and Pro-96 each carry hydroxyproline. The propeptide occupies 101 to 104 (LIKT).

This sequence belongs to the C-terminally encoded plant signaling peptide (CEP) family. As to quaternary structure, interacts with CEP receptors (e.g. CEPR1 and CEPR2). Post-translationally, the mature small signaling peptide is generated by proteolytic processing of the longer precursor. As to expression, expressed in lateral root primordia and in lateral roots excluding the meristem region.

It is found in the secreted. The protein resides in the extracellular space. The protein localises to the apoplast. Functionally, extracellular signaling peptide that may regulate primary root growth rate and systemic nitrogen (N)-demand signaling. Mediates up-regulation of genes involved in N uptake and assimilation pathways. The polypeptide is Precursor of CEP11 (Arabidopsis thaliana (Mouse-ear cress)).